The chain runs to 343 residues: Hydroxycarboxylic acid receptor 1 (343 aa).

The Extracellular portion of the chain corresponds to 1 to 21 (MDNGSCCLIEGEPISQVMPPL). N-linked (GlcNAc...) asparagine glycosylation occurs at asparagine 3. A helical transmembrane segment spans residues 22–42 (LILVFVLGALGNGIALCGFCF). The Cytoplasmic portion of the chain corresponds to 43–49 (HMKTWKS). The helical transmembrane segment at 50-70 (STIYLFNLAVADFLLMICLPL) threads the bilayer. The Extracellular segment spans residues 71-90 (RTDYYLRRRHWIFGDIACRL). A disulfide bridge links cysteine 88 with cysteine 165. A helical transmembrane segment spans residues 91–111 (VLFKLAMNRAGSIVFLTVVAV). Over 112–131 (DRYFKVVHPHHMVNAISNRT) the chain is Cytoplasmic. A helical transmembrane segment spans residues 132–152 (AAATACVLWTLVILGTVYLLM). The Extracellular portion of the chain corresponds to 153-182 (ESHLCVQGTLSSCESFIMESANGWHDVMFQ). Residues 183–203 (LEFFLPLTIILFCSVNVVWSL) traverse the membrane as a helical segment. At 204 to 220 (RRRQQLTRQARMRRATR) the chain is on the cytoplasmic side. Residues 221 to 241 (FIMVVASVFITCYLPSVLARL) form a helical membrane-spanning segment. The Extracellular portion of the chain corresponds to 242-259 (YFLWTVPTSACDPSVHTA). A helical membrane pass occupies residues 260 to 280 (LHVTLSFTYLNSMLDPLVYYF). Residues 281 to 343 (SSPSLPKFYT…SDGQWDLQVC (63 aa)) are Cytoplasmic-facing. The segment covering 319–334 (CSKSSIDGANRSQRPS) has biased composition (polar residues). Residues 319–343 (CSKSSIDGANRSQRPSDGQWDLQVC) are disordered.

The protein belongs to the G-protein coupled receptor 1 family. Highly expressed in subcutaneous fat and omental fat and detectable in lower levels in brain and many other tissues. High levels detected in epididymal and subcutaneous fat with slightly lower in omental fat, low levels are detected in the brain, skeletal muscle, kidney, liver and the pancreas (at protein level).

It is found in the cell membrane. In terms of biological role, acts as a receptor for L-lactate and mediates its anti-lipolytic effect through a G(i)-protein-mediated pathway. This Mus musculus (Mouse) protein is Hydroxycarboxylic acid receptor 1 (Hcar1).